Consider the following 119-residue polypeptide: Large ribosomal subunit protein uL22 (119 aa).

It belongs to the universal ribosomal protein uL22 family. In terms of assembly, part of the 50S ribosomal subunit.

Functionally, this protein binds specifically to 23S rRNA; its binding is stimulated by other ribosomal proteins, e.g. L4, L17, and L20. It is important during the early stages of 50S assembly. It makes multiple contacts with different domains of the 23S rRNA in the assembled 50S subunit and ribosome. Its function is as follows. The globular domain of the protein is located near the polypeptide exit tunnel on the outside of the subunit, while an extended beta-hairpin is found that lines the wall of the exit tunnel in the center of the 70S ribosome. The sequence is that of Large ribosomal subunit protein uL22 from Pelodictyon phaeoclathratiforme (strain DSM 5477 / BU-1).